Here is a 603-residue protein sequence, read N- to C-terminus: UvrABC system protein C (603 aa).

Residues aspartate 15–isoleucine 92 form the GIY-YIG domain. The 36-residue stretch at lysine 197–threonine 232 folds into the UVR domain.

This sequence belongs to the UvrC family. In terms of assembly, interacts with UvrB in an incision complex.

The protein localises to the cytoplasm. Its function is as follows. The UvrABC repair system catalyzes the recognition and processing of DNA lesions. UvrC both incises the 5' and 3' sides of the lesion. The N-terminal half is responsible for the 3' incision and the C-terminal half is responsible for the 5' incision. The protein is UvrABC system protein C of Listeria monocytogenes serotype 4a (strain HCC23).